A 961-amino-acid polypeptide reads, in one-letter code: Mitogen-activated protein kinase kinase kinase 13-A (961 aa).

Positions 88-118 are disordered; the sequence is LRDQDEPENTAPQGSSHSGDGGSYSGNEDIR. Residues 169–410 form the Protein kinase domain; that stretch reads ISELQWLGSG…FRQILMHLDI (242 aa). ATP-binding positions include 175–183 and Lys-196; that span reads LGSGAQGAV. Asp-280 (proton acceptor) is an active-site residue. 2 leucine-zipper regions span residues 434 to 455 and 487 to 508; these read VKKHFEKIKSEGTCIHRLDEEL and LSAIMLQLEVREKELIRREQAV. Residues 458–497 adopt a coiled-coil conformation; sequence RRREELRHALDIREHYERKLERANNLYMELSAIMLQLEVR. Disordered stretches follow at residues 513 to 600, 615 to 637, and 799 to 883; these read PGTY…SKGS, ALSQQSSQHQTLASPPVTSCSPY, and RRIR…KLDD. Positions 560-578 are enriched in low complexity; it reads SAEGSAASASPISGSPKTS. A compositionally biased stretch (basic residues) spans 584 to 596; the sequence is NRYRSKPRHRRVN. Residues 810 to 823 show a composition bias toward acidic residues; the sequence is ESSEEEEGEVDSEV. Residues 811 to 824 form an acidic region; that stretch reads SSEEEEGEVDSEVE. A compositionally biased stretch (polar residues) spans 837-851; it reads KCQSYSTFSSENFSV.

This sequence belongs to the protein kinase superfamily. Ser/Thr protein kinase family.

It is found in the cytoplasm. It localises to the membrane. It carries out the reaction L-seryl-[protein] + ATP = O-phospho-L-seryl-[protein] + ADP + H(+). The catalysed reaction is L-threonyl-[protein] + ATP = O-phospho-L-threonyl-[protein] + ADP + H(+). Functionally, may have a role in the JNK signaling pathway. The polypeptide is Mitogen-activated protein kinase kinase kinase 13-A (map3k13-a) (Xenopus laevis (African clawed frog)).